Reading from the N-terminus, the 33-residue chain is uncharacterized protein (33 aa).

Residues Met-1–Lys-12 lie on the Cytoplasmic side of the membrane. A helical membrane pass occupies residues Leu-13–Tyr-33.

It is found in the cell inner membrane. This is an uncharacterized protein from Escherichia coli (strain K12).